Reading from the N-terminus, the 2571-residue chain is Highly reducing polyketide synthase 19 (2571 aa).

The interval 1–51 (MSPIFLGDSEDAATCRCGPPSSPSPELSGTETALTSDSDGPELLNPGPQGP) is disordered. The span at 27-38 (LSGTETALTSDS) shows a compositional bias: polar residues. In terms of domain architecture, Ketosynthase family 3 (KS3) spans 51-485 (PEPIAIIGMG…GANAHCILES (435 aa)). Active-site for beta-ketoacyl synthase activity residues include C224, H359, and H398. The tract at residues 609 to 932 (VFTGQGAQWA…PYNSALLRGK (324 aa)) is malonyl-CoA:ACP transacylase (MAT) domain. S701 serves as the catalytic For malonyltransferase activity. Positions 1019–1163 (HDLLGSRVPG…GLVKLTQNED (145 aa)) are N-terminal hotdog fold. Residues 1019-1340 (HDLLGSRVPG…SGCRMVPYSS (322 aa)) are dehydratase (DH) domain. Positions 1019-1344 (HDLLGSRVPG…MVPYSSGTAV (326 aa)) constitute a PKS/mFAS DH domain. The active-site Proton acceptor; for dehydratase activity is H1051. Residues 1177 to 1344 (MEQSAPRTWY…MVPYSSGTAV (168 aa)) are C-terminal hotdog fold. The active-site Proton donor; for dehydratase activity is the D1241. The interval 1800–2140 (NMSDAFVFTR…AFRALSGSTT (341 aa)) is enoyl reductase (ER) domain. Positions 2177–2355 (SYLLVGCLGG…ATSVGLGMIS (179 aa)) are ketoreductase (KR) domain. The 79-residue stretch at 2490–2568 (AVAAQALELV…MLSELIAGKL (79 aa)) folds into the Carrier domain. At S2527 the chain carries O-(pantetheine 4'-phosphoryl)serine.

It functions in the pathway polyketide biosynthesis. Functionally, highly reducing polyketide synthase; part of the gene cluster that mediates the biosynthesis of pyriculol and pyriculariol, two heptaketides that induce lesion formation upon application on rice leaves but are dispensable for pathogenicity. The highly reducing polyketide synthase synthesizes the heptaketide backbone of pyriculol and pyriculariol. Pyriculol and pyriculariol contain several hydroxyl moieties and double bonds, so it can be assumed that several reduction steps occur during biosynthesis. These reactions could be executed by PKS19 itself or partly by the tailoring enzymes OXR1, PXR2, RED1, RED2 or RED3, identified within the cluster. The FAD-linked oxidoreductase OXR1 is the only tailoring enzyme for which the function has been determined yet, and is involved in the oxidation of dihydropyriculol and dihydropyriculariol into pyriculol and pyriculariol, respectively. This is Highly reducing polyketide synthase 19 from Pyricularia oryzae (strain 70-15 / ATCC MYA-4617 / FGSC 8958) (Rice blast fungus).